Here is a 394-residue protein sequence, read N- to C-terminus: Homoserine O-succinyltransferase (394 aa).

The region spanning 54 to 368 is the AB hydrolase-1 domain; that stretch reads NAVLICHALS…SSPAGHDAFL (315 aa). S160 (nucleophile) is an active-site residue. A substrate-binding site is contributed by R236. Residues D331 and H364 contribute to the active site. D365 is a substrate binding site.

Belongs to the AB hydrolase superfamily. MetX family. In terms of assembly, homodimer.

The protein localises to the cytoplasm. It catalyses the reaction L-homoserine + succinyl-CoA = O-succinyl-L-homoserine + CoA. It functions in the pathway amino-acid biosynthesis; L-methionine biosynthesis via de novo pathway; O-succinyl-L-homoserine from L-homoserine: step 1/1. Transfers a succinyl group from succinyl-CoA to L-homoserine, forming succinyl-L-homoserine. This Magnetococcus marinus (strain ATCC BAA-1437 / JCM 17883 / MC-1) protein is Homoserine O-succinyltransferase.